A 262-amino-acid chain; its full sequence is DNA repair protein RecO (262 aa).

The protein belongs to the RecO family.

Functionally, involved in DNA repair and RecF pathway recombination. The protein is DNA repair protein RecO of Enterococcus faecalis (strain ATCC 700802 / V583).